The chain runs to 516 residues: Probable D,D-dipeptide-binding periplasmic protein DdpA (516 aa).

The signal sequence occupies residues 1 to 25; sequence MKRSISFRPTLLALVLATNFPVAHA.

The protein belongs to the bacterial solute-binding protein 5 family. As to quaternary structure, the complex is composed of two ATP-binding proteins (DdpD and DdpF), two transmembrane proteins (DdpB and DdpC) and a solute-binding protein (DdpA).

Its subcellular location is the periplasm. Functionally, part of the ABC transporter complex DdpABCDF, which is probably involved in D,D-dipeptide transport. The chain is Probable D,D-dipeptide-binding periplasmic protein DdpA (ddpA) from Escherichia coli (strain K12).